A 461-amino-acid polypeptide reads, in one-letter code: MTGTKRNGEEVVNENNNNNVAEETNKKAKVDESSTETTESTSCSLLSRCEKLDIVRKELDVKPWDQGKVTIQELITSLLDKTDRDAFFVADVGVIIKQWQKWVKNLPNVKPYYAVKCNPTVGVLRVLDALGTNYDCASRTEIESVLNLGVDPSRIIYANPCKQISALKFARAHNVKLMTFDNLSELEKIEKFFPEAELVLRIAPDDSKSVMRFGSKFGVHIDDCNDLLEMAKEMNLKVVGVSFHVGSGCQSGDSYADALIMVKSVFDMAKKLNMELTLVDVGGGFTGSDDEKFNAFTKVIREKTAELFSPNVKIIAEPGRYFAAQSHTLAVTVISKRSIKQEDNRQHPRRTSNNMRQYNYYLADGVYGSFNNTKFDYAKVEPLLLKPSTKQPTPCTLFGPTCDSIDVVLKDTQIPELKIGDWLYFQDMGAYTIASSSSFNGFCPPPVYYYNSIPEEELKNL.

The tract at residues 1–35 is disordered; the sequence is MTGTKRNGEEVVNENNNNNVAEETNKKAKVDESST. A compositionally biased stretch (low complexity) spans 13–22; sequence NENNNNNVAE. Over residues 23–32 the composition is skewed to basic and acidic residues; it reads ETNKKAKVDE. Lysine 116 carries the N6-(pyridoxal phosphate)lysine modification. Pyridoxal 5'-phosphate contacts are provided by residues serine 247, glycine 284, and 317–320; that span reads EPGR. 375–376 lines the substrate pocket; that stretch reads FD. Catalysis depends on cysteine 402, which acts as the Proton donor; shared with dimeric partner. Residue aspartate 403 coordinates substrate. Residue tyrosine 431 participates in pyridoxal 5'-phosphate binding.

This sequence belongs to the Orn/Lys/Arg decarboxylase class-II family. Homodimer. Only the dimer is catalytically active, as the active sites are constructed of residues from both monomers. Requires pyridoxal 5'-phosphate as cofactor.

It carries out the reaction L-ornithine + H(+) = putrescine + CO2. Its pathway is amine and polyamine biosynthesis; putrescine biosynthesis via L-ornithine pathway; putrescine from L-ornithine: step 1/1. Inhibited by antizyme (AZ) in response to polyamine levels. AZ inhibits the assembly of the functional homodimer by binding to ODC monomers and targeting them for ubiquitin-independent proteolytic destruction by the 26S proteasome. Its function is as follows. Catalyzes the first and rate-limiting step of polyamine biosynthesis that converts ornithine into putrescine, which is the precursor for the polyamines, spermidine and spermine. Polyamines are essential for cell proliferation and are implicated in cellular processes, ranging from DNA replication to apoptosis. The protein is Probable ornithine decarboxylase (odc) of Dictyostelium discoideum (Social amoeba).